Reading from the N-terminus, the 429-residue chain is Antho-RFamide neuropeptides type 2 (429 aa).

The first 22 residues, 1–22 (MTTVSYVTILLTVLVQVLTSDA), serve as a signal peptide directing secretion. Residues 23–233 (KATNNKRELS…EFQGRFGRED (211 aa)) constitute a propeptide that is removed on maturation. Over residues 230 to 371 (GREDQGRFGR…EDIAKEDQGR (142 aa)) the composition is skewed to basic and acidic residues. The segment at 230–429 (GREDQGRFGR…KSDDALAKIS (200 aa)) is disordered. Q234 carries the pyrrolidone carboxylic acid modification. A Phenylalanine amide modification is found at F237. A propeptide spanning residues 239-241 (RED) is cleaved from the precursor. Q242 carries the post-translational modification Pyrrolidone carboxylic acid. Position 245 is a phenylalanine amide (F245). The propeptide occupies 247 to 249 (RED). Residue Q250 is modified to Pyrrolidone carboxylic acid. At F253 the chain carries Phenylalanine amide. A propeptide spanning residues 255–257 (RED) is cleaved from the precursor. At Q258 the chain carries Pyrrolidone carboxylic acid. Phenylalanine amide is present on F261. Residues 263 to 265 (RED) constitute a propeptide that is removed on maturation. Q266 is modified (pyrrolidone carboxylic acid). A Phenylalanine amide modification is found at F269. The propeptide occupies 271–273 (RED). At Q274 the chain carries Pyrrolidone carboxylic acid. Position 277 is a phenylalanine amide (F277). A propeptide spanning residues 279 to 289 (RELQGRFGRED) is cleaved from the precursor. Residue Q290 is modified to Pyrrolidone carboxylic acid. F293 carries the phenylalanine amide modification. The propeptide occupies 295-297 (RED). Pyrrolidone carboxylic acid is present on Q298. F301 is modified (phenylalanine amide). Positions 303–305 (RED) are excised as a propeptide. At Q306 the chain carries Pyrrolidone carboxylic acid. F309 is subject to Phenylalanine amide. A propeptide spanning residues 311–321 (RELQGRFGRED) is cleaved from the precursor. Residue Q322 is modified to Pyrrolidone carboxylic acid. F325 carries the post-translational modification Phenylalanine amide. A propeptide spanning residues 327 to 329 (RED) is cleaved from the precursor. Pyrrolidone carboxylic acid is present on Q330. Phenylalanine amide is present on F333. Residues 335-342 (REDLAKED) constitute a propeptide that is removed on maturation. At Q343 the chain carries Pyrrolidone carboxylic acid. At F346 the chain carries Phenylalanine amide. Positions 348–355 (REDLAKED) are excised as a propeptide. Pyrrolidone carboxylic acid is present on Q356. Phenylalanine amide is present on F359. Positions 361–368 (REDIAKED) are excised as a propeptide. The residue at position 369 (Q369) is a Pyrrolidone carboxylic acid. Phenylalanine amide is present on F372. Residues 374–429 (RNAAAAAKKRTIDVIDIESDPKPQTRFRDGKDMQEKRKVEKKDKIEKSDDALAKIS) constitute a propeptide that is removed on maturation. The span at 392–429 (SDPKPQTRFRDGKDMQEKRKVEKKDKIEKSDDALAKIS) shows a compositional bias: basic and acidic residues.

This sequence belongs to the FARP (FMRFamide related peptide) family.

It localises to the secreted. Its function is as follows. Not known but it could act as a transmitter at neuromuscular synapses. The chain is Antho-RFamide neuropeptides type 2 from Anthopleura elegantissima (Green aggregating anemone).